We begin with the raw amino-acid sequence, 1008 residues long: Pheromone-regulated membrane protein 10 (1008 aa).

3 disordered regions span residues 1-273 (MSQS…TFLG), 342-384 (KLPE…FYTP), and 477-506 (KNDF…TQDE). A compositionally biased stretch (low complexity) spans 70–85 (DTIISNASTTNNSSSD). Over residues 95–111 (GENSNLPNFNFSANQVH) the composition is skewed to polar residues. Composition is skewed to acidic residues over residues 116-132 (ANED…EDTF) and 143-161 (GSDE…EDKE). The span at 162–186 (EVVNEKEEIADDLHSKSSKTSRESK) shows a compositional bias: basic and acidic residues. Residues 188–204 (FNAGTKNSRRSLNSLQR) show a composition bias toward polar residues. Positions 205 to 214 (NETDVTDQLK) are enriched in basic and acidic residues. The span at 215–225 (RTTSTTSSSKR) shows a compositional bias: low complexity. Residues 226-239 (SNSDKRTGFKDILR) are compositionally biased toward basic and acidic residues. Polar residues predominate over residues 346–364 (GTSSDQQLDYSDTSASNLI). The span at 483–498 (GPKRMANKIPGRKHGA) shows a compositional bias: basic residues. Helical transmembrane passes span 683-703 (SPWL…PFAF), 707-727 (WYDV…QFFV), 736-756 (SVFE…IGSI), 762-782 (FCFS…YIIL), 800-820 (MFYA…GASL), 838-858 (IKQD…LGLI), 866-886 (LPIM…AGKH), 892-912 (VTEF…NLYS), 917-937 (GMAV…GIAS), and 978-998 (VKVS…VYPF).

It belongs to the ThrE exporter (TC 2.A.79) family.

Its subcellular location is the membrane. In Debaryomyces hansenii (strain ATCC 36239 / CBS 767 / BCRC 21394 / JCM 1990 / NBRC 0083 / IGC 2968) (Yeast), this protein is Pheromone-regulated membrane protein 10.